Here is a 479-residue protein sequence, read N- to C-terminus: FAD-dependent monooxygenase cdmI (479 aa).

The FAD site is built by E43, G57, and R116. N-linked (GlcNAc...) asparagine glycans are attached at residues N156 and N198. FAD contacts are provided by D315 and A328. Residues 453–473 (PFILAVLAGLGFLLTMFKQQW) form a helical membrane-spanning segment.

This sequence belongs to the paxM FAD-dependent monooxygenase family. Requires FAD as cofactor.

The protein resides in the membrane. It carries out the reaction verruculide C + AH2 + O2 = verruculide C epoxide + A + H2O. Its pathway is secondary metabolite biosynthesis; terpenoid biosynthesis. FAD-dependent monooxygenase; part of the gene cluster that mediates the biosynthesis of chrodrimanin B, a meroterpenoid that acts as a potent blocker of insect GABA-gated chloride channels. The first step of the pathway is the biosynthesis of 6-hydroxymellein by the polyketide synthase cdmE. The prenyltransferase cdmH acts as a 6-hydroxymellein 5-farnesyltransferase and produces the hydrophobic metabolite verruculide C. The FAD-dependent monooxygenase cdmI further converts verruculide C into verruculide B. The terpene cyclase cdmG then produced the pentacyclic molecule 3-hydroxypentacecilide A, the backbone structure of chrodrimanin B, via folding the farnesyl moiety of the substrate into the chair-boat conformation. The short-chain dehydrogenase/reductase cdmF functions as the 3-OH dehydrogenase that oxidizes the C-3 hydroxyl group of 3-hydroxypentacecilide A and produces chrodrimanin C, the dehydrogenated product of 3-hydroxypentacecilide A. The cytochrome P450 monooxygenase cdmJ then accepts both 3-hydroxypentacecilide A and chrodrimanin C and functions as a C-7-beta-hydroxylase to produce respectively chrodrimanin H and chrodrimanin F. The dioxygenase cdmA accepts chrodrimanin H to afford chrodrimanin E, which is further transformed to chrodrimanin A by the dioxygenase cdmD. CdmA can also accept chrodrimanin C as substrate to convert it into verruculide A, which is further converted into chrodrimanin T by cdmD. The last step of the biosynthesis is proposed to be performed by the acetyltransferase cdmC which acetylates chrodrimanin A to yield chrodrimanin B. The pathway may also lead to the production of additional shunt products, including chrodrimanins T and U. The chain is FAD-dependent monooxygenase cdmI from Talaromyces verruculosus (Penicillium verruculosum).